The primary structure comprises 31 residues: Cytochrome b6-f complex subunit 6 (31 aa).

Residues 3-23 (VAIDYFLLVGFCFAVTSGLWI) form a helical membrane-spanning segment.

It belongs to the PetL family. As to quaternary structure, the 4 large subunits of the cytochrome b6-f complex are cytochrome b6, subunit IV (17 kDa polypeptide, PetD), cytochrome f and the Rieske protein, while the 4 small subunits are PetG, PetL, PetM and PetN. The complex functions as a dimer.

The protein resides in the plastid. It localises to the chloroplast thylakoid membrane. In terms of biological role, component of the cytochrome b6-f complex, which mediates electron transfer between photosystem II (PSII) and photosystem I (PSI), cyclic electron flow around PSI, and state transitions. PetL is important for photoautotrophic growth as well as for electron transfer efficiency and stability of the cytochrome b6-f complex. This chain is Cytochrome b6-f complex subunit 6, found in Phaeodactylum tricornutum (strain CCAP 1055/1).